Here is a 190-residue protein sequence, read N- to C-terminus: dTTP/UTP pyrophosphatase (190 aa).

The Proton acceptor role is filled by Asp67.

It belongs to the Maf family. YhdE subfamily. It depends on a divalent metal cation as a cofactor.

It localises to the cytoplasm. It catalyses the reaction dTTP + H2O = dTMP + diphosphate + H(+). The enzyme catalyses UTP + H2O = UMP + diphosphate + H(+). Its function is as follows. Nucleoside triphosphate pyrophosphatase that hydrolyzes dTTP and UTP. May have a dual role in cell division arrest and in preventing the incorporation of modified nucleotides into cellular nucleic acids. This chain is dTTP/UTP pyrophosphatase, found in Aquifex aeolicus (strain VF5).